A 265-amino-acid polypeptide reads, in one-letter code: Cyclin-C (265 aa).

Residues 48 to 151 form the Cyclin N-terminal domain; that stretch reads IQVLGEQLKL…LLENLDCCLI (104 aa).

It belongs to the cyclin family. Cyclin C subfamily. Component of the Cdk8 module of the Mediator complex.

The protein resides in the nucleus. Its function is as follows. Component of the Mediator complex, a coactivator involved in regulated gene transcription of nearly all RNA polymerase II-dependent genes. Mediator functions as a bridge to convey information from gene-specific regulatory proteins to the basal RNA polymerase II transcription machinery. Mediator is recruited to promoters by direct interactions with regulatory proteins and serves as a scaffold for the assembly of a functional preinitiation complex with RNA polymerase II and the general transcription factors. Binds to and activates cyclin-dependent kinase Cdk8 that phosphorylates the CTD (C-terminal domain) of the large subunit of RNA polymerase II (RNAp II), which may inhibit the formation of a transcription initiation complex. The sequence is that of Cyclin-C (CycC) from Aedes aegypti (Yellowfever mosquito).